Consider the following 443-residue polypeptide: Threonine/serine transporter TdcC (443 aa).

The next 11 helical transmembrane spans lie at 22–42, 44–64, 97–117, 140–160, 163–183, 207–227, 261–281, 319–339, 366–386, 389–409, and 423–443; these read TTWTLGLFGTAIGAGVLFFPI, AGFGGLIPILLMLVLAYPIAF, GVVITFLYFFAICPLLWIYGV, FVALFLLLLMAFVIWFGKDLM, VMSYLVWPFIASLVLISLSLI, ILVTVWLGISIMVFSFNFSPI, MLMVAVVMFFAFSCLFTLSPA, ASIIALVAIFKSFFGHYLGTL, ISMIFIMGSTWVVAYANPNIL, IEAMGAPIIASLLCLLPMYAI, and DNVFVTVIGLLTILNIVYKLF.

The protein belongs to the amino acid/polyamine transporter 2 family. SdaC/TdcC subfamily.

Its subcellular location is the cell inner membrane. It carries out the reaction L-threonine(in) + H(+)(in) = L-threonine(out) + H(+)(out). The catalysed reaction is L-serine(in) + H(+)(in) = L-serine(out) + H(+)(out). Involved in the import of threonine and serine into the cell, with the concomitant import of a proton (symport system). The polypeptide is Threonine/serine transporter TdcC (Citrobacter koseri (strain ATCC BAA-895 / CDC 4225-83 / SGSC4696)).